Consider the following 400-residue polypeptide: Enoyl-[acyl-carrier-protein] reductase [NADH] 1 (400 aa).

Residues 48-53 (GASSGY), 74-75 (FE), 111-112 (DA), and 139-140 (LA) each bind NAD(+). Y225 is a substrate binding site. The Proton donor role is filled by Y235. Residues K244 and 273–275 (VVT) each bind NAD(+).

Belongs to the TER reductase family. In terms of assembly, monomer.

It catalyses the reaction a 2,3-saturated acyl-[ACP] + NAD(+) = a (2E)-enoyl-[ACP] + NADH + H(+). It functions in the pathway lipid metabolism; fatty acid biosynthesis. Its function is as follows. Involved in the final reduction of the elongation cycle of fatty acid synthesis (FAS II). Catalyzes the reduction of a carbon-carbon double bond in an enoyl moiety that is covalently linked to an acyl carrier protein (ACP). This Vibrio vulnificus (strain YJ016) protein is Enoyl-[acyl-carrier-protein] reductase [NADH] 1.